Here is a 365-residue protein sequence, read N- to C-terminus: DNA replication and repair protein RecF (365 aa).

An ATP-binding site is contributed by 30–37 (GDNGEGKT).

The protein belongs to the RecF family.

It is found in the cytoplasm. The RecF protein is involved in DNA metabolism; it is required for DNA replication and normal SOS inducibility. RecF binds preferentially to single-stranded, linear DNA. It also seems to bind ATP. In Leptospira interrogans serogroup Icterohaemorrhagiae serovar Lai (strain 56601), this protein is DNA replication and repair protein RecF.